We begin with the raw amino-acid sequence, 101 residues long: Protein Tat (101 aa).

Residues 1 to 20 (MEVVDPNLDPWKHPGSQPET) are disordered. The tract at residues 1–24 (MEVVDPNLDPWKHPGSQPETPCNK) is interaction with human CREBBP. Residues 1–48 (MEVVDPNLDPWKHPGSQPETPCNKCYCKKCCFHCQLCFTRKGLGISYG) are transactivation. Cys22, Cys25, and Cys27 together coordinate Zn(2+). The tract at residues 22 to 37 (CNKCYCKKCCFHCQLC) is cysteine-rich. Lys28 is modified (N6-acetyllysine; by host PCAF). Positions 30, 33, 34, and 37 each coordinate Zn(2+). The interval 38-48 (FTRKGLGISYG) is core. The segment at 47–101 (YGRKKRRQRRRTPQSGEVHQDPVSKQPLSQTRGDPKGPEESKKKVESKTKTDPSD) is disordered. Basic residues predominate over residues 48–58 (GRKKRRQRRRT). Positions 49 to 57 (RKKRRQRRR) match the Nuclear localization signal, RNA-binding (TAR), and protein transduction motif. The interaction with the host capping enzyme RNGTT stretch occupies residues 49–86 (RKKRRQRRRTPQSGEVHQDPVSKQPLSQTRGDPKGPEE). N6-acetyllysine; by host EP300 and GCN5L2 is present on residues Lys50 and Lys51. 2 positions are modified to asymmetric dimethylarginine; by host PRMT6: Arg52 and Arg53. Lys71 participates in a covalent cross-link: Glycyl lysine isopeptide (Lys-Gly) (interchain with G-Cter in ubiquitin). The Cell attachment site signature appears at 78–80 (RGD). The segment covering 79 to 101 (GDPKGPEESKKKVESKTKTDPSD) has biased composition (basic and acidic residues).

It belongs to the lentiviruses Tat family. As to quaternary structure, interacts with host CCNT1. Associates with the P-TEFb complex composed at least of Tat, P-TEFb (CDK9 and CCNT1), TAR RNA, RNA Pol II. Recruits the HATs CREBBP, TAF1/TFIID, EP300, PCAF and GCN5L2. Interacts with host KAT5/Tip60; this interaction targets the latter to degradation. Interacts with the host deacetylase SIRT1. Interacts with host capping enzyme RNGTT; this interaction stimulates RNGTT. Binds to host KDR, and to the host integrins ITGAV/ITGB3 and ITGA5/ITGB1. Interacts with host KPNB1/importin beta-1 without previous binding to KPNA1/importin alpha-1. Interacts with EIF2AK2. Interacts with host nucleosome assembly protein NAP1L1; this interaction may be required for the transport of Tat within the nucleus, since the two proteins interact at the nuclear rim. Interacts with host C1QBP/SF2P32; this interaction involves lysine-acetylated Tat. Interacts with the host chemokine receptors CCR2, CCR3 and CXCR4. Interacts with host DPP4/CD26; this interaction may trigger an anti-proliferative effect. Interacts with host LDLR. Interacts with the host extracellular matrix metalloproteinase MMP1. Interacts with host PRMT6; this interaction mediates Tat's methylation. Interacts with, and is ubiquitinated by MDM2/Hdm2. Interacts with host PSMC3 and HTATIP2. Interacts with STAB1; this interaction may overcome SATB1-mediated repression of IL2 and IL2RA (interleukin) in T cells by binding to the same domain than HDAC1. Interacts (when acetylated) with human CDK13, thereby increasing HIV-1 mRNA splicing and promoting the production of the doubly spliced HIV-1 protein Nef. Interacts with host TBP; this interaction modulates the activity of transcriptional pre-initiation complex. Interacts with host RELA. Interacts with host PLSCR1; this interaction negatively regulates Tat transactivation activity by altering its subcellular distribution. In terms of processing, asymmetrical arginine methylation by host PRMT6 seems to diminish the transactivation capacity of Tat and affects the interaction with host CCNT1. Acetylation by EP300, CREBBP, GCN5L2/GCN5 and PCAF regulates the transactivation activity of Tat. EP300-mediated acetylation of Lys-50 promotes dissociation of Tat from the TAR RNA through the competitive binding to PCAF's bromodomain. In addition, the non-acetylated Tat's N-terminus can also interact with PCAF. PCAF-mediated acetylation of Lys-28 enhances Tat's binding to CCNT1. Lys-50 is deacetylated by SIRT1. Post-translationally, polyubiquitination by host MDM2 does not target Tat to degradation, but activates its transactivation function and fosters interaction with CCNT1 and TAR RNA. In terms of processing, phosphorylated by EIF2AK2 on serine and threonine residues adjacent to the basic region important for TAR RNA binding and function. Phosphorylation of Tat by EIF2AK2 is dependent on the prior activation of EIF2AK2 by dsRNA.

Its subcellular location is the host nucleus. The protein localises to the host nucleolus. It is found in the host cytoplasm. It localises to the secreted. Its function is as follows. Transcriptional activator that increases RNA Pol II processivity, thereby increasing the level of full-length viral transcripts. Recognizes a hairpin structure at the 5'-LTR of the nascent viral mRNAs referred to as the transactivation responsive RNA element (TAR) and recruits the cyclin T1-CDK9 complex (P-TEFb complex) that will in turn hyperphosphorylate the RNA polymerase II to allow efficient elongation. The CDK9 component of P-TEFb and other Tat-activated kinases hyperphosphorylate the C-terminus of RNA Pol II that becomes stabilized and much more processive. Other factors such as HTATSF1/Tat-SF1, SUPT5H/SPT5, and HTATIP2 are also important for Tat's function. Besides its effect on RNA Pol II processivity, Tat induces chromatin remodeling of proviral genes by recruiting the histone acetyltransferases (HATs) CREBBP, EP300 and PCAF to the chromatin. This also contributes to the increase in proviral transcription rate, especially when the provirus integrates in transcriptionally silent region of the host genome. To ensure maximal activation of the LTR, Tat mediates nuclear translocation of NF-kappa-B by interacting with host RELA. Through its interaction with host TBP, Tat may also modulate transcription initiation. Tat can reactivate a latently infected cell by penetrating in it and transactivating its LTR promoter. In the cytoplasm, Tat is thought to act as a translational activator of HIV-1 mRNAs. Functionally, extracellular circulating Tat can be endocytosed by surrounding uninfected cells via the binding to several surface receptors such as CD26, CXCR4, heparan sulfate proteoglycans (HSPG) or LDLR. Neurons are rarely infected, but they internalize Tat via their LDLR. Through its interaction with nuclear HATs, Tat is potentially able to control the acetylation-dependent cellular gene expression. Modulates the expression of many cellular genes involved in cell survival, proliferation or in coding for cytokines or cytokine receptors. Tat plays a role in T-cell and neurons apoptosis. Tat induced neurotoxicity and apoptosis probably contribute to neuroAIDS. Circulating Tat also acts as a chemokine-like and/or growth factor-like molecule that binds to specific receptors on the surface of the cells, affecting many cellular pathways. In the vascular system, Tat binds to ITGAV/ITGB3 and ITGA5/ITGB1 integrins dimers at the surface of endothelial cells and competes with bFGF for heparin-binding sites, leading to an excess of soluble bFGF. The sequence is that of Protein Tat from Homo sapiens (Human).